The following is a 267-amino-acid chain: Phosphatidylglycerol--prolipoprotein diacylglyceryl transferase (267 aa).

The next 4 membrane-spanning stretches (helical) occupy residues 20–40 (LEIR…VYLA), 57–77 (FILI…VAFS), 88–108 (IFAI…GAIV), and 117–137 (FINT…AQAI). Residue R139 participates in a 1,2-diacyl-sn-glycero-3-phospho-(1'-sn-glycerol) binding. 3 consecutive transmembrane segments (helical) span residues 175 to 195 (QPTF…VCVL), 205 to 225 (GEIT…IEGL), and 235 to 255 (IRVS…MVVL).

The protein belongs to the Lgt family.

It is found in the cell membrane. It catalyses the reaction L-cysteinyl-[prolipoprotein] + a 1,2-diacyl-sn-glycero-3-phospho-(1'-sn-glycerol) = an S-1,2-diacyl-sn-glyceryl-L-cysteinyl-[prolipoprotein] + sn-glycerol 1-phosphate + H(+). It participates in protein modification; lipoprotein biosynthesis (diacylglyceryl transfer). Functionally, catalyzes the transfer of the diacylglyceryl group from phosphatidylglycerol to the sulfhydryl group of the N-terminal cysteine of a prolipoprotein, the first step in the formation of mature lipoproteins. In Streptococcus suis (strain 98HAH33), this protein is Phosphatidylglycerol--prolipoprotein diacylglyceryl transferase.